A 104-amino-acid polypeptide reads, in one-letter code: Pyrimidine/purine nucleoside phosphorylase (104 aa).

It belongs to the nucleoside phosphorylase PpnP family.

It carries out the reaction a purine D-ribonucleoside + phosphate = a purine nucleobase + alpha-D-ribose 1-phosphate. The enzyme catalyses adenosine + phosphate = alpha-D-ribose 1-phosphate + adenine. The catalysed reaction is cytidine + phosphate = cytosine + alpha-D-ribose 1-phosphate. It catalyses the reaction guanosine + phosphate = alpha-D-ribose 1-phosphate + guanine. It carries out the reaction inosine + phosphate = alpha-D-ribose 1-phosphate + hypoxanthine. The enzyme catalyses thymidine + phosphate = 2-deoxy-alpha-D-ribose 1-phosphate + thymine. The catalysed reaction is uridine + phosphate = alpha-D-ribose 1-phosphate + uracil. It catalyses the reaction xanthosine + phosphate = alpha-D-ribose 1-phosphate + xanthine. Functionally, catalyzes the phosphorolysis of diverse nucleosides, yielding D-ribose 1-phosphate and the respective free bases. Can use uridine, adenosine, guanosine, cytidine, thymidine, inosine and xanthosine as substrates. Also catalyzes the reverse reactions. This Leptospira borgpetersenii serovar Hardjo-bovis (strain L550) protein is Pyrimidine/purine nucleoside phosphorylase.